The chain runs to 72 residues: UPF0270 protein YheU (72 aa).

This sequence belongs to the UPF0270 family.

This chain is UPF0270 protein YheU, found in Escherichia fergusonii (strain ATCC 35469 / DSM 13698 / CCUG 18766 / IAM 14443 / JCM 21226 / LMG 7866 / NBRC 102419 / NCTC 12128 / CDC 0568-73).